We begin with the raw amino-acid sequence, 208 residues long: Uracil phosphoribosyltransferase (208 aa).

Residues R78, R103, and 130–138 (DPMLATGGT) contribute to the 5-phospho-alpha-D-ribose 1-diphosphate site. Uracil is bound by residues I193 and 198-200 (GDA). D199 is a 5-phospho-alpha-D-ribose 1-diphosphate binding site.

The protein belongs to the UPRTase family. Requires Mg(2+) as cofactor.

It carries out the reaction UMP + diphosphate = 5-phospho-alpha-D-ribose 1-diphosphate + uracil. Its pathway is pyrimidine metabolism; UMP biosynthesis via salvage pathway; UMP from uracil: step 1/1. Allosterically activated by GTP. Catalyzes the conversion of uracil and 5-phospho-alpha-D-ribose 1-diphosphate (PRPP) to UMP and diphosphate. This chain is Uracil phosphoribosyltransferase, found in Desulfotalea psychrophila (strain LSv54 / DSM 12343).